A 303-amino-acid polypeptide reads, in one-letter code: Putative ankyrin repeat protein R601 (303 aa).

4 ANK repeats span residues 86 to 115, 117 to 146, 147 to 176, and 200 to 233; these read DDNM…DVTV, NNFA…DITV, DNYF…NVDS, and NADV…DVSY.

This is Putative ankyrin repeat protein R601 from Acanthamoeba polyphaga (Amoeba).